Reading from the N-terminus, the 352-residue chain is MAIISSNIGDNDLPLRKKELRLVDSKIIPEEKRNNNLNLARPLTLKEFIGQEQLKSSLRIAIDASIFRKEPLEHILLYGQPGLGKTTLAFLIAHELNTKCKIATAPAIERPRDIVGLLLGLKEGEVLFIDEIHRLNRLTEELLYSAMEDFRLDLTMGANKGTRCRTINLPRFTLIGATTKLASISAPLRDRFGISQKIEFYNYDELKQILLNFSRLINLNLDDEASYDLAKISRGTPRIALRLLRRVRDYAQVVMKTNTISVNLIKKALNSYQIDDKGLDSLDRHYLSFINQNNNIPIGLDSIAAGLGDDSSMLEFVVEPYLIKIGFLTRTPRGRLLTALGKKYIDSKNDDF.

The tract at residues 13–201 is large ATPase domain (RuvB-L); the sequence is LPLRKKELRL…FGISQKIEFY (189 aa). ATP contacts are provided by residues Arg-41, Gly-82, Lys-85, Thr-86, Thr-87, 148–150, Arg-191, Tyr-201, and Arg-238; that span reads EDF. Thr-86 lines the Mg(2+) pocket. Residues 202–273 are small ATPAse domain (RuvB-S); sequence NYDELKQILL…LIKKALNSYQ (72 aa). The interval 276–352 is head domain (RuvB-H); it reads DKGLDSLDRH…KYIDSKNDDF (77 aa). DNA contacts are provided by Arg-330 and Arg-335.

Belongs to the RuvB family. Homohexamer. Forms an RuvA(8)-RuvB(12)-Holliday junction (HJ) complex. HJ DNA is sandwiched between 2 RuvA tetramers; dsDNA enters through RuvA and exits via RuvB. An RuvB hexamer assembles on each DNA strand where it exits the tetramer. Each RuvB hexamer is contacted by two RuvA subunits (via domain III) on 2 adjacent RuvB subunits; this complex drives branch migration. In the full resolvosome a probable DNA-RuvA(4)-RuvB(12)-RuvC(2) complex forms which resolves the HJ.

The protein resides in the cytoplasm. The catalysed reaction is ATP + H2O = ADP + phosphate + H(+). In terms of biological role, the RuvA-RuvB-RuvC complex processes Holliday junction (HJ) DNA during genetic recombination and DNA repair, while the RuvA-RuvB complex plays an important role in the rescue of blocked DNA replication forks via replication fork reversal (RFR). RuvA specifically binds to HJ cruciform DNA, conferring on it an open structure. The RuvB hexamer acts as an ATP-dependent pump, pulling dsDNA into and through the RuvAB complex. RuvB forms 2 homohexamers on either side of HJ DNA bound by 1 or 2 RuvA tetramers; 4 subunits per hexamer contact DNA at a time. Coordinated motions by a converter formed by DNA-disengaged RuvB subunits stimulates ATP hydrolysis and nucleotide exchange. Immobilization of the converter enables RuvB to convert the ATP-contained energy into a lever motion, pulling 2 nucleotides of DNA out of the RuvA tetramer per ATP hydrolyzed, thus driving DNA branch migration. The RuvB motors rotate together with the DNA substrate, which together with the progressing nucleotide cycle form the mechanistic basis for DNA recombination by continuous HJ branch migration. Branch migration allows RuvC to scan DNA until it finds its consensus sequence, where it cleaves and resolves cruciform DNA. This Prochlorococcus marinus (strain MIT 9301) protein is Holliday junction branch migration complex subunit RuvB.